The chain runs to 526 residues: Alpha-1,3-mannosyl-glycoprotein 4-beta-N-acetylglucosaminyltransferase A (526 aa).

Residues 1–6 (MRLRNG) are Cytoplasmic-facing. The helical; Signal-anchor for type II membrane protein transmembrane segment at 7–27 (TVATALVFVTSFLTLSWYTTW) threads the bilayer. The stretch at 28–63 (QNGKEKLIAYQREFLALKERLRVAEHRISQRSSELN) forms a coiled coil. The Lumenal segment spans residues 28 to 526 (QNGKEKLIAY…NEIHIKKVTS (499 aa)). Asn-449 carries an N-linked (GlcNAc...) asparagine glycan. Residue Ser-465 is modified to Phosphoserine.

The protein belongs to the glycosyltransferase 54 family. Requires a divalent metal cation as cofactor. N-glycosylated.

The protein localises to the golgi apparatus membrane. It is found in the secreted. The enzyme catalyses N(4)-{beta-D-GlcNAc-(1-&gt;2)-alpha-D-Man-(1-&gt;3)-[beta-D-GlcNAc-(1-&gt;2)-alpha-D-Man-(1-&gt;6)]-beta-D-Man-(1-&gt;4)-beta-D-GlcNAc-(1-&gt;4)-beta-D-GlcNAc}-L-asparaginyl-[protein] + UDP-N-acetyl-alpha-D-glucosamine = N(4)-{beta-D-GlcNAc-(1-&gt;2)-[beta-D-GlcNAc-(1-&gt;4)]-alpha-D-Man-(1-&gt;3)-[beta-D-GlcNAc-(1-&gt;2)-alpha-D-Man-(1-&gt;6)]-beta-D-Man-(1-&gt;4)-beta-D-GlcNAc-(1-&gt;4)-beta-D-GlcNAc}-L-asparaginyl-[protein] + UDP + H(+). The catalysed reaction is an N(4)-{beta-D-GlcNAc-(1-&gt;2)-alpha-D-Man-(1-&gt;3)-[alpha-D-Man-(1-&gt;6)]-beta-D-Man-(1-&gt;4)-beta-D-GlcNAc-(1-&gt;4)-beta-D-GlcNAc}-L-asparaginyl-[protein] + UDP-N-acetyl-alpha-D-glucosamine = an N(4)-{beta-D-GlcNAc-(1-&gt;2)-[beta-D-GlcNAc-(1-&gt;4)]-alpha-D-Man-(1-&gt;3)-[alpha-D-Man-(1-&gt;6)]-beta-D-Man-(1-&gt;4)-beta-D-GlcNAc-(1-&gt;4)-beta-D-GlcNAc}-L-asparaginyl-[protein] + UDP + H(+). It catalyses the reaction an N(4)-{beta-D-GlcNAc-(1-&gt;2)-alpha-D-Man-(1-&gt;3)-[beta-D-GlcNAc-(1-&gt;2)-[beta-D-GlcNAc-(1-&gt;6)]-alpha-D-Man-(1-&gt;6)]-beta-D-Man-(1-&gt;4)-beta-D-GlcNAc-(1-&gt;4)-beta-D-GlcNAc}-L-asparaginyl-[protein] + UDP-N-acetyl-alpha-D-glucosamine = an N(4)-{beta-D-GlcNAc-(1-&gt;2)-[beta-D-GlcNAc-(1-&gt;4)]-alpha-D-Man-(1-&gt;3)-[beta-D-GlcNAc-(1-&gt;2)-[beta-D-GlcNAc-(1-&gt;6)]-alpha-D-Man-(1-&gt;6)]-beta-D-Man-(1-&gt;4)-beta-D-GlcNAc-(1-&gt;4)-beta-D-GlcNAc}-L-asparaginyl-[protein] + UDP + H(+). It carries out the reaction an N(4)-{beta-D-GlcNAc-(1-&gt;2)-alpha-D-Man-(1-&gt;3)-[beta-D-GlcNAc-(1-&gt;2)-alpha-D-Man-(1-&gt;6)]-beta-D-Man-(1-&gt;4)-beta-D-GlcNAc-(1-&gt;4)-[alpha-L-Fuc-(1-&gt;6)]-beta-D-GlcNAc}-L-asparaginyl-[protein] + UDP-N-acetyl-alpha-D-glucosamine = N(4)-{beta-D-GlcNAc-(1-&gt;2)-[beta-D-GlcNAc-(1-&gt;4)]-alpha-D-Man-(1-&gt;3)-[beta-D-GlcNAc-(1-&gt;2)-alpha-D-Man-(1-&gt;6)]-beta-D-Man-(1-&gt;4)-beta-D-GlcNAc-(1-&gt;4)-[alpha-L-Fuc-(1-&gt;6)]-beta-D-GlcNAc}-asparaginyl-[protein] + UDP + H(+). The enzyme catalyses an N(4)-{beta-D-GlcNAc-(1-&gt;2)-alpha-D-Man-(1-&gt;3)-[beta-D-Gal-(1-&gt;4)-beta-D-GlcNAc-(1-&gt;2)-alpha-D-Man-(1-&gt;6)]-beta-D-Man-(1-&gt;4)-beta-D-GlcNAc-(1-&gt;4)-beta-D-GlcNAc}-L-asparaginyl-[protein] + UDP-N-acetyl-alpha-D-glucosamine = an N(4)-{beta-D-GlcNAc-(1-&gt;2)-[beta-D-GlcNAc-(1-&gt;4)]-alpha-D-Man-(1-&gt;3)-[beta-D-Gal-(1-&gt;4)-beta-D-GlcNAc-(1-&gt;2)-alpha-D-Man-(1-&gt;6)]-beta-D-Man-(1-&gt;4)-beta-D-GlcNAc-(1-&gt;4)-beta-D-GlcNAc}-L-asparaginyl-[protein] + UDP + H(+). The catalysed reaction is N(4)-{beta-D-GlcNAc-(1-&gt;2)-alpha-D-Man-(1-&gt;3)-[alpha-D-Man-(1-&gt;3)-{alpha-D-Man-(1-&gt;6)}-alpha-D-Man-(1-&gt;6)]-beta-D-Man-(1-&gt;4)-beta-D-GlcNAc-(1-&gt;4)-beta-D-GlcNAc}-asparaginyl-[protein] + UDP-N-acetyl-alpha-D-glucosamine = N(4)-{beta-D-GlcNAc-(1-&gt;2)-[beta-D-GlcNAc-(1-&gt;4)]-alpha-D-Man-(1-&gt;3)-[alpha-D-Man-(1-&gt;3)-{alpha-D-Man-(1-&gt;6)}-alpha-D-Man-(1-&gt;6)]-beta-D-Man-(1-&gt;4)-beta-D-GlcNAc-(1-&gt;4)-beta-D-GlcNAc}-asparaginyl-[protein] + UDP + H(+). It catalyses the reaction N(4)-{beta-D-GlcNAc-(1-&gt;2)-alpha-D-Man-(1-&gt;3)-beta-D-Man-(1-&gt;4)-beta-D-GlcNAc-(1-&gt;4)-beta-D-GlcNAc}-asparaginyl-[protein] + UDP-N-acetyl-alpha-D-glucosamine = N(4)-{beta-D-GlcNAc-(1-&gt;2)-[beta-D-GlcNAc-(1-&gt;4)]-alpha-D-Man-(1-&gt;3)-beta-D-Man-(1-&gt;4)-beta-D-GlcNAc-(1-&gt;4)-beta-D-GlcNAc}-asparaginyl-[protein] + UDP + H(+). Its pathway is protein modification; protein glycosylation. Its activity is regulated as follows. Inhibited by UDP. Glycosyltransferase that catalyze the transfer of GlcNAc from UDP-GlcNAc to the GlcNAcbeta1-2Manalpha1-3 arm of the core structure of N-linked glycans through a beta1-4 linkage and participates in the production of tri- and tetra-antennary N-linked sugar chains. Involved in glucose transport by mediating SLC2A2/GLUT2 glycosylation, thereby controlling cell-surface expression of SLC2A2 in pancreatic beta cells. This chain is Alpha-1,3-mannosyl-glycoprotein 4-beta-N-acetylglucosaminyltransferase A, found in Rattus norvegicus (Rat).